The chain runs to 316 residues: Acetyl-coenzyme A carboxylase carboxyl transferase subunit alpha (316 aa).

Positions 39–293 (RLQDKSKALT…RGELLTQLKM (255 aa)) constitute a CoA carboxyltransferase C-terminal domain.

This sequence belongs to the AccA family. Acetyl-CoA carboxylase is a heterohexamer composed of biotin carboxyl carrier protein (AccB), biotin carboxylase (AccC) and two subunits each of ACCase subunit alpha (AccA) and ACCase subunit beta (AccD).

The protein resides in the cytoplasm. It carries out the reaction N(6)-carboxybiotinyl-L-lysyl-[protein] + acetyl-CoA = N(6)-biotinyl-L-lysyl-[protein] + malonyl-CoA. It participates in lipid metabolism; malonyl-CoA biosynthesis; malonyl-CoA from acetyl-CoA: step 1/1. Component of the acetyl coenzyme A carboxylase (ACC) complex. First, biotin carboxylase catalyzes the carboxylation of biotin on its carrier protein (BCCP) and then the CO(2) group is transferred by the carboxyltransferase to acetyl-CoA to form malonyl-CoA. The chain is Acetyl-coenzyme A carboxylase carboxyl transferase subunit alpha from Pseudomonas aeruginosa (strain LESB58).